Reading from the N-terminus, the 277-residue chain is Orotidine 5'-phosphate decarboxylase (277 aa).

Lys-95 acts as the Proton donor in catalysis.

This sequence belongs to the OMP decarboxylase family. Type 2 subfamily.

The catalysed reaction is orotidine 5'-phosphate + H(+) = UMP + CO2. It functions in the pathway pyrimidine metabolism; UMP biosynthesis via de novo pathway; UMP from orotate: step 2/2. This Mycolicibacterium vanbaalenii (strain DSM 7251 / JCM 13017 / BCRC 16820 / KCTC 9966 / NRRL B-24157 / PYR-1) (Mycobacterium vanbaalenii) protein is Orotidine 5'-phosphate decarboxylase.